Here is a 276-residue protein sequence, read N- to C-terminus: Transmembrane protein 81 (276 aa).

The first 24 residues, 1–24, serve as a signal peptide directing secretion; that stretch reads MKTSATSFIPGSLVLAFCLPVVAT. The Extracellular portion of the chain corresponds to 25–225; the sequence is SPKTLAIPEK…QHPPWKKKVA (201 aa). N45 is a glycosylation site (N-linked (GlcNAc...) asparagine). The region spanning 83–176 is the Ig-like domain; that stretch reads TNWLCGMLHF…NLRLVKRLYF (94 aa). C104 and C160 form a disulfide bridge. The N-linked (GlcNAc...) asparagine glycan is linked to N211. The chain crosses the membrane as a helical span at residues 226-246; the sequence is IAVGIGVAGGVTGGVLVSIVL. Residues 247–276 lie on the Cytoplasmic side of the membrane; sequence CGRLSVIHSSASLETLQALLPKGGMLRKPD.

In terms of assembly, forms a complex with IZUMO1 and SPACA6 on spermatocyte cell membrane required for fertilization.

It is found in the cell membrane. Its function is as follows. Essential fertilization factor required for male fertility. Part of a conserved trimeric sperm complex with the essential fertilization factors IZUMO1 and SPACA6 which bridges sperm and oocyte membranes during fertilization by binding to IZUMO1R/JUNO on the oocyte. This Bos taurus (Bovine) protein is Transmembrane protein 81 (TMEM81).